We begin with the raw amino-acid sequence, 51 residues long: ATP synthase protein 8 (51 aa).

A helical transmembrane segment spans residues 7 to 27 (LNWAMMTIMFSLSLLVSMIIL).

This sequence belongs to the ATPase protein 8 family. F-type ATPases have 2 components, CF(1) - the catalytic core - and CF(0) - the membrane proton channel.

The protein resides in the mitochondrion membrane. Its function is as follows. Mitochondrial membrane ATP synthase (F(1)F(0) ATP synthase or Complex V) produces ATP from ADP in the presence of a proton gradient across the membrane which is generated by electron transport complexes of the respiratory chain. F-type ATPases consist of two structural domains, F(1) - containing the extramembraneous catalytic core and F(0) - containing the membrane proton channel, linked together by a central stalk and a peripheral stalk. During catalysis, ATP synthesis in the catalytic domain of F(1) is coupled via a rotary mechanism of the central stalk subunits to proton translocation. Part of the complex F(0) domain. Minor subunit located with subunit a in the membrane. The polypeptide is ATP synthase protein 8 (MT-ATP8) (Limulus polyphemus (Atlantic horseshoe crab)).